A 217-amino-acid chain; its full sequence is U2 snRNP component ist3 (217 aa).

The RRM domain occupies 31–109 (AYIYIGNLDF…RLVRVDHVAS (79 aa)). Disordered stretches follow at residues 119–138 (PANLVPLGESGSSLSVSTIN) and 154–217 (EVEQ…DLDG). Positions 128–138 (SGSSLSVSTIN) are enriched in polar residues. S160 carries the phosphoserine modification. 2 stretches are compositionally biased toward basic and acidic residues: residues 161 to 176 (PKDEKDLLDPMRDYIH) and 185 to 198 (HESSDRSDKSDSNR). Positions 199–217 (HSRHHRRHSRSRRHRDLDG) are enriched in basic residues.

The protein belongs to the IST3 family. In terms of assembly, belongs to the 40S cdc5-associated complex (or cwf complex), a spliceosome sub-complex reminiscent of a late-stage spliceosome composed of the U2, U5 and U6 snRNAs and at least brr2, cdc5, cwf2/prp3, cwf3/syf1, cwf4/syf3, cwf5/ecm2, spp42/cwf6, cwf7/spf27, cwf8, cwf9, cwf10, cwf11, cwf12, prp45/cwf13, cwf14, cwf15, cwf16, cwf17, cwf18, cwf19, cwf20, cwf21, cwf22, cwf23, cwf24, cwf25, cwf26, cyp7/cwf27, cwf28, cwf29/ist3, lea1, msl1, prp5/cwf1, prp10, prp12/sap130, prp17, prp22, sap61, sap62, sap114, sap145, slu7, smb1, smd1, smd3, smf1, smg1 and syf2.

The protein localises to the nucleus. Required for pre-mRNA splicing and spliceosome assembly. In Schizosaccharomyces pombe (strain 972 / ATCC 24843) (Fission yeast), this protein is U2 snRNP component ist3 (cwf29).